The following is a 131-amino-acid chain: Spermatocyte protein spe-27 (131 aa).

A signal peptide spans 1 to 17 (MNKSLIFLLSFAYSCYS).

Functionally, required for spermiogenesis. This is Spermatocyte protein spe-27 (spe-27) from Caenorhabditis elegans.